We begin with the raw amino-acid sequence, 279 residues long: Pantothenate synthetase (279 aa).

Residue 27–34 participates in ATP binding; the sequence is MGYLHEGH. His-34 serves as the catalytic Proton donor. Gln-58 contributes to the (R)-pantoate binding site. Gln-58 serves as a coordination point for beta-alanine. 144–147 contacts ATP; the sequence is GKKD. A (R)-pantoate-binding site is contributed by Gln-150. ATP is bound by residues Val-173 and 181–184; that span reads MSSR.

It belongs to the pantothenate synthetase family. As to quaternary structure, homodimer.

The protein resides in the cytoplasm. It carries out the reaction (R)-pantoate + beta-alanine + ATP = (R)-pantothenate + AMP + diphosphate + H(+). It functions in the pathway cofactor biosynthesis; (R)-pantothenate biosynthesis; (R)-pantothenate from (R)-pantoate and beta-alanine: step 1/1. Functionally, catalyzes the condensation of pantoate with beta-alanine in an ATP-dependent reaction via a pantoyl-adenylate intermediate. In Citrifermentans bemidjiense (strain ATCC BAA-1014 / DSM 16622 / JCM 12645 / Bem) (Geobacter bemidjiensis), this protein is Pantothenate synthetase.